Reading from the N-terminus, the 176-residue chain is Gamma-crystallin M2 (176 aa).

Beta/gamma crystallin 'Greek key' domains are found at residues 2–40 (GKVI…RVEG) and 41–83 (GCWV…RIIP). The connecting peptide stretch occupies residues 84-88 (QYRGS). Beta/gamma crystallin 'Greek key' domains lie at 89–129 (YRMR…HVMD) and 130–172 (GYWI…RRIM).

It belongs to the beta/gamma-crystallin family. Monomer.

Functionally, crystallins are the dominant structural components of the vertebrate eye lens. The protein is Gamma-crystallin M2 (GM2) of Chiloscyllium indicum (Slender bamboo shark).